The sequence spans 367 residues: Heme A synthase (367 aa).

The next 8 helical transmembrane spans lie at 25–45 (ALRL…LVGG), 111–131 (LIAR…WLTG), 139–159 (WPLV…WWMV), 174–194 (LATH…IMRG), 210–230 (GLAA…ALVA), 272–292 (FIHR…MVIA), 305–325 (AVLL…TLLM), and 327–347 (VPLH…GFAV). Heme is bound at residue His-274. His-335 serves as a coordination point for heme.

Belongs to the COX15/CtaA family. Type 2 subfamily. As to quaternary structure, interacts with CtaB. Heme b is required as a cofactor.

It localises to the cell membrane. It catalyses the reaction Fe(II)-heme o + 2 A + H2O = Fe(II)-heme a + 2 AH2. It participates in porphyrin-containing compound metabolism; heme A biosynthesis; heme A from heme O: step 1/1. In terms of biological role, catalyzes the conversion of heme O to heme A by two successive hydroxylations of the methyl group at C8. The first hydroxylation forms heme I, the second hydroxylation results in an unstable dihydroxymethyl group, which spontaneously dehydrates, resulting in the formyl group of heme A. In Rhizobium etli (strain ATCC 51251 / DSM 11541 / JCM 21823 / NBRC 15573 / CFN 42), this protein is Heme A synthase.